The sequence spans 328 residues: Malate dehydrogenase (328 aa).

11–17 serves as a coordination point for NAD(+); sequence GAAGQIG. Arg92 and Arg98 together coordinate substrate. NAD(+) contacts are provided by residues Asn105, Gln112, and 129–131; that span reads VGN. Positions 131 and 162 each coordinate substrate. His187 serves as the catalytic Proton acceptor.

Belongs to the LDH/MDH superfamily. MDH type 2 family.

It catalyses the reaction (S)-malate + NAD(+) = oxaloacetate + NADH + H(+). Its function is as follows. Catalyzes the reversible oxidation of malate to oxaloacetate. The chain is Malate dehydrogenase from Coxiella burnetii (strain CbuK_Q154) (Coxiella burnetii (strain Q154)).